The chain runs to 787 residues: Integrin beta-3 (787 aa).

The first 25 residues, 1-25, serve as a signal peptide directing secretion; it reads MRAQWPGQLWAALLALGALAGVVVG. At 26 to 717 the chain is on the extracellular side; it reads ESNICTTRGV…EEPECPKGPD (692 aa). The PSI domain maps to 29–75; it reads ICTTRGVNSCQQCLAVSPVCAWCSDETLSQGSPRCNLKENLLKDNCA. Cystine bridges form between Cys30/Cys48, Cys38/Cys460, Cys41/Cys63, Cys51/Cys74, Cys202/Cys209, Cys257/Cys298, Cys399/Cys411, Cys431/Cys458, Cys462/Cys482, Cys473/Cys485, Cys487/Cys496, Cys498/Cys528, Cys511/Cys526, Cys520/Cys531, Cys533/Cys546, Cys548/Cys569, Cys553/Cys567, Cys561/Cys572, and Cys574/Cys583. In terms of domain architecture, VWFA spans 134-376; that stretch reads DYPVDIYYLM…QLIVDAYGKI (243 aa). 2 residues coordinate Mg(2+): Ser146 and Ser148. Ca(2+)-binding residues include Ser148, Asp151, Asp152, and Asp183. The CX3CL1-binding stretch occupies residues 202–209; the sequence is CYNMKNAC. The tract at residues 202–209 is involved in CX3CL1-, NRG1-, FGF1- and IGF1-binding; sequence CYNMKNAC. Ca(2+)-binding residues include Asn240, Asp242, Pro244, Glu245, and Asp276. Residue Glu245 coordinates Mg(2+). Residues 292–312 form a CX3CL1-binding region; it reads LPNDGHCHIGTDNHYSASTTM. Asn345 and Asn396 each carry an N-linked (GlcNAc...) asparagine glycan. 4 I-EGF domains span residues 462-497, 498-547, 548-584, and 585-624; these read CQAFAQPSSPRCNNGNGTFECGVCRCDQGWLGSMCE, CSEE…KYCE, CDDFSCVRYKGEMCSGHGQCNCGDCVCDSDWTGYYCN, and CTTRTDTCMSTNGLLCSGRGNCECGSCVCVQPGSYGDTCE. Residue Asn477 is glycosylated (N-linked (GlcNAc...) asparagine). An N-linked (GlcNAc...) asparagine glycan is attached at Asn584. 9 disulfides stabilise this stretch: Cys585-Cys608, Cys592-Cys606, Cys600-Cys611, Cys613-Cys623, Cys626-Cys629, Cys633-Cys680, Cys639-Cys660, Cys642-Cys656, and Cys688-Cys712. Asn679 carries an N-linked (GlcNAc...) asparagine glycan. A helical membrane pass occupies residues 718 to 740; sequence ILVVLLSVMGAILLIGLATLLIW. Over 741 to 787 the chain is Cytoplasmic; it reads KLLITIHDRKEFAKFEEERARAKWDTANNPLYKEATSTFTNITYRGT. The residue at position 766 (Thr766) is a Phosphothreonine. Phosphotyrosine is present on Tyr772. The short motif at 776 to 782 is the LIR element; the sequence is TSTFTNI. Thr778 is subject to Phosphothreonine. Position 784 is a phosphotyrosine (Tyr784).

Belongs to the integrin beta chain family. Heterodimer of an alpha and a beta subunit. Beta-3 (ITGB3) associates with either alpha-IIB (ITGA2B) or alpha-V (ITGAV). Interacts with FLNB and COMP. Interacts with PDIA6 following platelet stimulation. Interacts with SYK; upon activation by ITGB3 promotes platelet adhesion. Interacts with MYO10. Interacts with DAB2. Interacts with FERMT2. Integrin ITGAV:ITGB3 interacts with FBLN5 (via N-terminus). Interacts with EMP2; regulates the levels of the heterodimer ITGA5:ITGB3 integrin expression on the plasma membrane. ITGAV:ITGB3 interacts with CCN3. ITGAV:ITGB3 and ITGA2B:ITGB3 interact with SELP (via C-type lectin domain); the interaction mediates cell-cell interaction and adhesion. ITGAV:ITGB3 interacts with AGRA2. ITGAV:ITGB3 is found in a ternary complex with CX3CR1 and CX3CL1. ITGAV:ITGB3 is found in a ternary complex with NRG1 and ERBB3. ITGAV:ITGB3 is found in a ternary complex with FGF1 and FGFR1. ITGAV:ITGB3 interacts with FGF2; it is likely that FGF2 can simultaneously bind ITGAV:ITGB3 and FGF receptors. ITGAV:ITGB3 binds to IL1B. ITGAV:ITGB3 is found in a ternary complex with IGF1 and IGF1R. ITGAV:ITGB3 interacts with IGF2. ITGAV:ITGB3 interacts with FBN1. ITGAV:ITGB3 interacts with CD9, CD81 and CD151 (via second extracellular domain). Interacts (via the allosteric site (site 2)) with CXCL12 in a CXCR4-independent manner. Interacts with MXRA8/DICAM; the interaction inhibits ITGAV:ITGB3 heterodimer formation. ITGAV:ITGB3 interacts with PTN. Forms a complex with PTPRZ1 and PTN that stimulates endothelial cell migration through ITGB3 Tyr-772 phosphorylation. ITGAV:ITGB3 interacts with SLC6A4. Interacts with SLC6A4 (via C-terminus); this interaction regulates SLC6A4 trafficking. ITGA2B:ITGB3 interacts with PPIA/CYPA; the interaction is ROS and PPIase activity-dependent and is increased in the presence of thrombin. Interacts with tensin TNS3; TNS3 also interacts with PEAK1, thus acting as an adapter molecule to bridge the association of PEAK1 with ITGB3. Interacts with TM4SF19. In terms of processing, phosphorylated on tyrosine residues in response to thrombin-induced platelet aggregation. Probably involved in outside-in signaling.

Its subcellular location is the cell membrane. The protein localises to the cell projection. It is found in the lamellipodium membrane. The protein resides in the cell junction. It localises to the focal adhesion. Its subcellular location is the postsynaptic cell membrane. The protein localises to the synapse. Integrin alpha-V/beta-3 (ITGAV:ITGB3) is a receptor for cytotactin, fibronectin, laminin, matrix metalloproteinase-2, osteopontin, osteomodulin, prothrombin, thrombospondin, vitronectin and von Willebrand factor. Integrin alpha-IIB/beta-3 (ITGA2B:ITGB3) is a receptor for fibronectin, fibrinogen, plasminogen, prothrombin, thrombospondin and vitronectin. Integrins alpha-IIB/beta-3 and alpha-V/beta-3 recognize the sequence R-G-D in a wide array of ligands. Integrin alpha-IIB/beta-3 recognizes the sequence H-H-L-G-G-G-A-K-Q-A-G-D-V in fibrinogen gamma chain. Following activation integrin alpha-IIB/beta-3 brings about platelet/platelet interaction through binding of soluble fibrinogen. This step leads to rapid platelet aggregation which physically plugs ruptured endothelial surfaces. Fibrinogen binding enhances SELP expression in activated platelets. ITGAV:ITGB3 binds to fractalkine (CX3CL1) and acts as its coreceptor in CX3CR1-dependent fractalkine signaling. ITGAV:ITGB3 binds to NRG1 (via EGF domain) and this binding is essential for NRG1-ERBB signaling. ITGAV:ITGB3 binds to FGF1 and this binding is essential for FGF1 signaling. ITGAV:ITGB3 binds to FGF2 and this binding is essential for FGF2 signaling. ITGAV:ITGB3 binds to IGF1 and this binding is essential for IGF1 signaling. ITGAV:ITGB3 binds to IGF2 and this binding is essential for IGF2 signaling. ITGAV:ITGB3 binds to IL1B and this binding is essential for IL1B signaling. ITGAV:ITGB3 binds to PLA2G2A via a site (site 2) which is distinct from the classical ligand-binding site (site 1) and this induces integrin conformational changes and enhanced ligand binding to site 1. ITGAV:ITGB3 acts as a receptor for fibrillin-1 (FBN1) and mediates R-G-D-dependent cell adhesion to FBN1. ITGAV:ITGB3 binds to the Lilrb4a/Gp49b receptor and enhances the Lilrb4a-mediated inhibition of mast cell activation. ITGAV:ITGB3 also suppresses marginal zone B cell antibody production through its interaction with Lilrb4a. In brain, plays a role in synaptic transmission and plasticity. Involved in the regulation of the serotonin neurotransmission, is required to localize to specific compartments within the synapse the serotonin receptor SLC6A4 and for an appropriate reuptake of serotonin. Controls excitatory synaptic strength by regulating GRIA2-containing AMPAR endocytosis, which affects AMPAR abundance and composition. ITGAV:ITGB3 act as a receptor for CD40LG. ITGAV:ITGB3 acts as a receptor for IBSP and promotes cell adhesion and migration to IBSP. The chain is Integrin beta-3 from Mus musculus (Mouse).